The chain runs to 91 residues: Small ribosomal subunit protein bS20 (91 aa).

The protein belongs to the bacterial ribosomal protein bS20 family.

In terms of biological role, binds directly to 16S ribosomal RNA. This is Small ribosomal subunit protein bS20 from Wolinella succinogenes (strain ATCC 29543 / DSM 1740 / CCUG 13145 / JCM 31913 / LMG 7466 / NCTC 11488 / FDC 602W) (Vibrio succinogenes).